Here is a 421-residue protein sequence, read N- to C-terminus: Large ribosomal subunit protein uL4 (421 aa).

N-acetylalanine is present on alanine 2. Lysine 14 carries the N6-acetyllysine modification. An Omega-N-methylarginine modification is found at arginine 97. The residue at position 106 (lysine 106) is an N6-acetyllysine. Lysine 239 is covalently cross-linked (Glycyl lysine isopeptide (Lys-Gly) (interchain with G-Cter in SUMO2)). Position 259 is an N6-acetyllysine (lysine 259). Residue threonine 266 is modified to Phosphothreonine. Serine 290 and serine 295 each carry phosphoserine. Residue arginine 300 is modified to Citrulline. A Glycyl lysine isopeptide (Lys-Gly) (interchain with G-Cter in SUMO2) cross-link involves residue lysine 327. N6-acetyllysine is present on residues lysine 333 and lysine 353. The residue at position 364 (lysine 364) is an N6-acetyllysine; alternate. A Glycyl lysine isopeptide (Lys-Gly) (interchain with G-Cter in SUMO1); alternate cross-link involves residue lysine 364. Phosphoserine is present on serine 365. Residues 365–379 (SEKIVPEKGAGDKKP) show a composition bias toward basic and acidic residues. The segment at 365–421 (SEKIVPEKGAGDKKPAVGKKGKKPVDAKKLKKPAGKKVVTKKPAEKKPTTEEKKSAA) is disordered. Over residues 393–404 (KLKKPAGKKVVT) the composition is skewed to basic residues. The span at 406–421 (KPAEKKPTTEEKKSAA) shows a compositional bias: basic and acidic residues.

The protein belongs to the universal ribosomal protein uL4 family. In terms of assembly, component of the large ribosomal subunit. May bind IPO9 with low affinity. Interacts with RBM3. Post-translationally, citrullinated by PADI4.

It localises to the cytoplasm. In terms of biological role, component of the large ribosomal subunit. The ribosome is a large ribonucleoprotein complex responsible for the synthesis of proteins in the cell. The sequence is that of Large ribosomal subunit protein uL4 (Rpl4) from Rattus norvegicus (Rat).